Consider the following 751-residue polypeptide: SKI family transcriptional corepressor 1 homolog-B (751 aa).

Disordered regions lie at residues 1–30, 234–267, 386–434, 459–569, and 600–635; these read MESI…SGPP, SRKR…PHKT, LDVS…GIPP, YGNR…HGNK, and QRET…SEER. Polar residues-rich tracts occupy residues 14–27 and 244–259; these read SSCS…QSYS and SESS…TQGE. Residues 416–428 show a composition bias toward basic and acidic residues; it reads RNEEDKSGDESRS. Low complexity predominate over residues 479 to 491; the sequence is SESSSYRSVSPDV. The span at 539-558 shows a compositional bias: polar residues; sequence QENTQMHTLNDLHSTNSSET. 3 stretches are compositionally biased toward basic and acidic residues: residues 559-569, 603-612, and 620-635; these read RPSDMESHGNK, TSVKDVHEEE, and MEPK…SEER. A coiled-coil region spans residues 666–704; that stretch reads SMAKEELQKQLVEQVELRKKLEREFQNLKDSFQDQMKRE.

Belongs to the SKI family.

Its subcellular location is the nucleus. Its function is as follows. May inhibit BMP signaling. This is SKI family transcriptional corepressor 1 homolog-B (skor1b) from Danio rerio (Zebrafish).